The sequence spans 142 residues: Transcriptional regulator MraZ (142 aa).

SpoVT-AbrB domains follow at residues 5-47 and 76-119; these read THTP…PAPE and AHDE…DRVA.

It belongs to the MraZ family. In terms of assembly, forms oligomers.

It is found in the cytoplasm. The protein resides in the nucleoid. This is Transcriptional regulator MraZ from Salinispora arenicola (strain CNS-205).